We begin with the raw amino-acid sequence, 255 residues long: Small ribosomal subunit protein eS4 (255 aa).

The region spanning 44 to 107 is the S4 RNA-binding domain; that stretch reads IPLLILVRDV…DEYYRMIPYP (64 aa).

The protein belongs to the eukaryotic ribosomal protein eS4 family.

In Ignicoccus hospitalis (strain KIN4/I / DSM 18386 / JCM 14125), this protein is Small ribosomal subunit protein eS4.